We begin with the raw amino-acid sequence, 285 residues long: Undecaprenyl-diphosphatase (285 aa).

The next 7 helical transmembrane spans lie at 12 to 34 (IVIAILQGATELFPVSSLGHAVI), 49 to 69 (IFLPFLVMLHLGTAIALLVYF), 93 to 113 (IHILALLVVATIPAVIIGGLL), 120 to 140 (LFGTARYAAIFLFLNGLLLLL), 159 to 179 (LTYADAAIIGLWQCLAFLPGI), 234 to 254 (VATIGAMVAAVTALASTAFLM), and 263 to 283 (WALSPFGYYCVLAGAVSFFIL).

It belongs to the UppP family.

The protein resides in the cell inner membrane. It carries out the reaction di-trans,octa-cis-undecaprenyl diphosphate + H2O = di-trans,octa-cis-undecaprenyl phosphate + phosphate + H(+). Functionally, catalyzes the dephosphorylation of undecaprenyl diphosphate (UPP). Confers resistance to bacitracin. The sequence is that of Undecaprenyl-diphosphatase from Gluconacetobacter diazotrophicus (strain ATCC 49037 / DSM 5601 / CCUG 37298 / CIP 103539 / LMG 7603 / PAl5).